Consider the following 257-residue polypeptide: Uxu operon transcriptional regulator (257 aa).

The 69-residue stretch at 8 to 76 (QRPYQEVGAM…RGAGIYVLDN (69 aa)) folds into the HTH gntR-type domain. A DNA-binding region (H-T-H motif) is located at residues 36-55 (EREIAEMLDVTRTVVREALI).

Repressor for the uxuRBA operon. The sequence is that of Uxu operon transcriptional regulator (uxuR) from Escherichia coli (strain K12).